The chain runs to 207 residues: NADH-quinone oxidoreductase subunit C (207 aa).

This sequence belongs to the complex I 30 kDa subunit family. As to quaternary structure, NDH-1 is composed of 14 different subunits. Subunits NuoB, C, D, E, F, and G constitute the peripheral sector of the complex.

It is found in the cell inner membrane. It catalyses the reaction a quinone + NADH + 5 H(+)(in) = a quinol + NAD(+) + 4 H(+)(out). Functionally, NDH-1 shuttles electrons from NADH, via FMN and iron-sulfur (Fe-S) centers, to quinones in the respiratory chain. The immediate electron acceptor for the enzyme in this species is believed to be ubiquinone. Couples the redox reaction to proton translocation (for every two electrons transferred, four hydrogen ions are translocated across the cytoplasmic membrane), and thus conserves the redox energy in a proton gradient. The sequence is that of NADH-quinone oxidoreductase subunit C from Thermus thermophilus (strain ATCC BAA-163 / DSM 7039 / HB27).